A 231-amino-acid polypeptide reads, in one-letter code: Phosphatidylserine decarboxylase proenzyme (231 aa).

Ser-200 (schiff-base intermediate with substrate; via pyruvic acid) is an active-site residue. Residue Ser-200 is modified to Pyruvic acid (Ser); by autocatalysis.

The protein belongs to the phosphatidylserine decarboxylase family. PSD-A subfamily. As to quaternary structure, heterodimer of a large membrane-associated beta subunit and a small pyruvoyl-containing alpha subunit. Requires pyruvate as cofactor. In terms of processing, is synthesized initially as an inactive proenzyme. Formation of the active enzyme involves a self-maturation process in which the active site pyruvoyl group is generated from an internal serine residue via an autocatalytic post-translational modification. Two non-identical subunits are generated from the proenzyme in this reaction, and the pyruvate is formed at the N-terminus of the alpha chain, which is derived from the carboxyl end of the proenzyme. The post-translation cleavage follows an unusual pathway, termed non-hydrolytic serinolysis, in which the side chain hydroxyl group of the serine supplies its oxygen atom to form the C-terminus of the beta chain, while the remainder of the serine residue undergoes an oxidative deamination to produce ammonia and the pyruvoyl prosthetic group on the alpha chain.

It is found in the cell membrane. It catalyses the reaction a 1,2-diacyl-sn-glycero-3-phospho-L-serine + H(+) = a 1,2-diacyl-sn-glycero-3-phosphoethanolamine + CO2. Its pathway is phospholipid metabolism; phosphatidylethanolamine biosynthesis; phosphatidylethanolamine from CDP-diacylglycerol: step 2/2. Its function is as follows. Catalyzes the formation of phosphatidylethanolamine (PtdEtn) from phosphatidylserine (PtdSer). This Mycobacterium tuberculosis (strain ATCC 25177 / H37Ra) protein is Phosphatidylserine decarboxylase proenzyme.